We begin with the raw amino-acid sequence, 354 residues long: L-Lys-D/L-Arg epimerase (354 aa).

Residues Thr135 and 160-162 (KIK) contribute to the substrate site. Mg(2+)-binding residues include Asp190, Glu215, and Asp240. Residues Lys265, Asp295, and 318–320 (DLD) each bind substrate.

This sequence belongs to the mandelate racemase/muconate lactonizing enzyme family. Mg(2+) serves as cofactor.

Catalyzes the epimerization of L-Lys-L-Arg to L-Lys-D-Arg (in vitro). Catalyzes the epimerization of positively charged dipeptides, with a preference for substrates with a basic amino acid in the second position. Has epimerase activity with L-Lys-L-Lys, L-Arg-L-Arg, L-Val-L-Arg, L-Val-L-Lys and L-Ala-L-Arg (in vitro). The protein is L-Lys-D/L-Arg epimerase of Desulforapulum autotrophicum (strain ATCC 43914 / DSM 3382 / VKM B-1955 / HRM2) (Desulfobacterium autotrophicum).